A 386-amino-acid polypeptide reads, in one-letter code: Ribonuclease D (386 aa).

A 3'-5' exonuclease domain is found at 3–174 (HTITTTDELA…EIYEYLSAEL (172 aa)). The HRDC domain maps to 213 to 294 (SGRVVAIAQQ…ARGMSVPNSE (82 aa)).

The protein belongs to the RNase D family. A divalent metal cation is required as a cofactor.

The protein localises to the cytoplasm. The catalysed reaction is Exonucleolytic cleavage that removes extra residues from the 3'-terminus of tRNA to produce 5'-mononucleotides.. Its function is as follows. Exonuclease involved in the 3' processing of various precursor tRNAs. Initiates hydrolysis at the 3'-terminus of an RNA molecule and releases 5'-mononucleotides. This is Ribonuclease D from Jannaschia sp. (strain CCS1).